The primary structure comprises 97 residues: Nucleoid-associated protein Hac_0048 (97 aa).

This sequence belongs to the YbaB/EbfC family. As to quaternary structure, homodimer.

It is found in the cytoplasm. The protein localises to the nucleoid. Its function is as follows. Binds to DNA and alters its conformation. May be involved in regulation of gene expression, nucleoid organization and DNA protection. The protein is Nucleoid-associated protein Hac_0048 of Helicobacter acinonychis (strain Sheeba).